Consider the following 417-residue polypeptide: Serine hydroxymethyltransferase (417 aa).

Residues Leu-120 and 124–126 (GHL) contribute to the (6S)-5,6,7,8-tetrahydrofolate site. The residue at position 229 (Lys-229) is an N6-(pyridoxal phosphate)lysine.

Belongs to the SHMT family. In terms of assembly, homodimer. Pyridoxal 5'-phosphate serves as cofactor.

Its subcellular location is the cytoplasm. It catalyses the reaction (6R)-5,10-methylene-5,6,7,8-tetrahydrofolate + glycine + H2O = (6S)-5,6,7,8-tetrahydrofolate + L-serine. The protein operates within one-carbon metabolism; tetrahydrofolate interconversion. It functions in the pathway amino-acid biosynthesis; glycine biosynthesis; glycine from L-serine: step 1/1. Functionally, catalyzes the reversible interconversion of serine and glycine with tetrahydrofolate (THF) serving as the one-carbon carrier. This reaction serves as the major source of one-carbon groups required for the biosynthesis of purines, thymidylate, methionine, and other important biomolecules. Also exhibits THF-independent aldolase activity toward beta-hydroxyamino acids, producing glycine and aldehydes, via a retro-aldol mechanism. This Anaeromyxobacter dehalogenans (strain 2CP-C) protein is Serine hydroxymethyltransferase.